The chain runs to 153 residues: Xanthine-guanine phosphoribosyltransferase (153 aa).

5-phospho-alpha-D-ribose 1-diphosphate is bound by residues 37–38, R69, and 88–96; these read RG and DDLVDTGGT. R69 contacts GMP. Residue D89 coordinates Mg(2+). Guanine-binding residues include D92 and I135. The xanthine site is built by D92 and I135. GMP is bound by residues 92 to 96 and 134 to 135; these read DTGGT and WI.

The protein belongs to the purine/pyrimidine phosphoribosyltransferase family. XGPT subfamily. As to quaternary structure, homotetramer. Mg(2+) serves as cofactor.

Its subcellular location is the cell inner membrane. The enzyme catalyses GMP + diphosphate = guanine + 5-phospho-alpha-D-ribose 1-diphosphate. It catalyses the reaction XMP + diphosphate = xanthine + 5-phospho-alpha-D-ribose 1-diphosphate. The catalysed reaction is IMP + diphosphate = hypoxanthine + 5-phospho-alpha-D-ribose 1-diphosphate. It participates in purine metabolism; GMP biosynthesis via salvage pathway; GMP from guanine: step 1/1. Its pathway is purine metabolism; XMP biosynthesis via salvage pathway; XMP from xanthine: step 1/1. Functionally, purine salvage pathway enzyme that catalyzes the transfer of the ribosyl-5-phosphate group from 5-phospho-alpha-D-ribose 1-diphosphate (PRPP) to the N9 position of the 6-oxopurines guanine and xanthine to form the corresponding ribonucleotides GMP (guanosine 5'-monophosphate) and XMP (xanthosine 5'-monophosphate), with the release of PPi. To a lesser extent, also acts on hypoxanthine. This chain is Xanthine-guanine phosphoribosyltransferase, found in Proteus mirabilis (strain HI4320).